The following is a 405-amino-acid chain: Dynactin subunit 2 (405 aa).

Residues 1-25 (MADPKYADLPGIARNEPDVYETSDL) are disordered. Ala-2 carries the N-acetylalanine modification. Tyr-6 carries the post-translational modification Phosphotyrosine. Ser-85 bears the Phosphoserine mark. Tyr-88 is subject to Phosphotyrosine. The stretch at 105–132 (YQRLLHEVQELTTEVEKIKMTVKESATE) forms a coiled coil. Phosphothreonine is present on Thr-136. A disordered region spans residues 187 to 207 (KNTKGAGSGGKTTSGSPPDSS). Ser-324 bears the Phosphoserine mark.

This sequence belongs to the dynactin subunit 2 family. Subunit of dynactin, a multiprotein complex part of a tripartite complex with dynein and a adapter, such as BICDL1, BICD2 or HOOK3. The dynactin complex is built around ACTR1A/ACTB filament and consists of an actin-related filament composed of a shoulder domain, a pointed end and a barbed end. Its length is defined by its flexible shoulder domain. The soulder is composed of 2 DCTN1 subunits, 4 DCTN2 and 2 DCTN3. The 4 DCNT2 (via N-terminus) bind the ACTR1A filament and act as molecular rulers to determine the length. The pointed end is important for binding dynein-dynactin cargo adapters and consists of 4 subunits: ACTR10, DCNT4, DCTN5 and DCTN6. The barbed end is composed of a CAPZA1:CAPZB heterodimers, which binds ACTR1A/ACTB filament and dynactin and stabilizes dynactin. Interacts with BICD2 and CEP135. Interacts with DYNAP. Interacts with ECPAS. Interacts with MAPRE1.

The protein resides in the cytoplasm. It is found in the cytoskeleton. The protein localises to the microtubule organizing center. Its subcellular location is the centrosome. It localises to the membrane. Functionally, part of the dynactin complex that activates the molecular motor dynein for ultra-processive transport along microtubules. In the dynactin soulder domain, binds the ACTR1A filament and acts as a molecular ruler to determine the length. Modulates cytoplasmic dynein binding to an organelle, and plays a role in prometaphase chromosome alignment and spindle organization during mitosis. Involved in anchoring microtubules to centrosomes. May play a role in synapse formation during brain development. The polypeptide is Dynactin subunit 2 (DCTN2) (Sus scrofa (Pig)).